Here is a 798-residue protein sequence, read N- to C-terminus: Protocadherin beta-2 (798 aa).

An N-terminal signal peptide occupies residues Met1–Cys30. At Gln31–Leu692 the chain is on the extracellular side. Cadherin domains follow at residues Val37–Phe135, Leu136–Phe244, Tyr249–Leu349, Leu354–Phe453, and Tyr458–Val563. Asn171 is a glycosylation site (N-linked (GlcNAc...) asparagine). N6-acetyllysine is present on Lys299. 2 N-linked (GlcNAc...) asparagine glycosylation sites follow: Asn420 and Asn438. Asn569 is a glycosylation site (N-linked (GlcNAc...) asparagine). A Cadherin 6 domain is found at Gly570–Leu673. A helical membrane pass occupies residues Val693–Val713. Topologically, residues Arg714–Thr798 are cytoplasmic.

The protein resides in the cell membrane. Potential calcium-dependent cell-adhesion protein. May be involved in the establishment and maintenance of specific neuronal connections in the brain. The chain is Protocadherin beta-2 (PCDHB2) from Homo sapiens (Human).